The primary structure comprises 202 residues: ATP-dependent Clp protease proteolytic subunit (202 aa).

Ser98 functions as the Nucleophile in the catalytic mechanism. His123 is an active-site residue.

The protein belongs to the peptidase S14 family. Fourteen ClpP subunits assemble into 2 heptameric rings which stack back to back to give a disk-like structure with a central cavity, resembling the structure of eukaryotic proteasomes.

The protein localises to the cytoplasm. The catalysed reaction is Hydrolysis of proteins to small peptides in the presence of ATP and magnesium. alpha-casein is the usual test substrate. In the absence of ATP, only oligopeptides shorter than five residues are hydrolyzed (such as succinyl-Leu-Tyr-|-NHMec, and Leu-Tyr-Leu-|-Tyr-Trp, in which cleavage of the -Tyr-|-Leu- and -Tyr-|-Trp bonds also occurs).. In terms of biological role, cleaves peptides in various proteins in a process that requires ATP hydrolysis. Has a chymotrypsin-like activity. Plays a major role in the degradation of misfolded proteins. The chain is ATP-dependent Clp protease proteolytic subunit from Syntrophobacter fumaroxidans (strain DSM 10017 / MPOB).